A 90-amino-acid chain; its full sequence is Cytochrome c7 (90 aa).

A signal peptide spans 1–20 (MKRIIASLALSVFCAGLAFA). Heme is bound by residues H37, H40, C47, C50, H51, H67, C70, C73, H74, C84, C87, and H88.

Post-translationally, binds 3 heme groups per subunit.

May be involved in anaerobic iron respiration. This Geobacter metallireducens (strain ATCC 53774 / DSM 7210 / GS-15) protein is Cytochrome c7.